We begin with the raw amino-acid sequence, 202 residues long: FMN-dependent NADH:quinone oxidoreductase 2 (202 aa).

FMN-binding positions include Ser9, 15–17 (SAS), 95–98 (MYNF), and 139–142 (TAGG).

It belongs to the azoreductase type 1 family. In terms of assembly, homodimer. It depends on FMN as a cofactor.

It carries out the reaction 2 a quinone + NADH + H(+) = 2 a 1,4-benzosemiquinone + NAD(+). It catalyses the reaction N,N-dimethyl-1,4-phenylenediamine + anthranilate + 2 NAD(+) = 2-(4-dimethylaminophenyl)diazenylbenzoate + 2 NADH + 2 H(+). Its function is as follows. Quinone reductase that provides resistance to thiol-specific stress caused by electrophilic quinones. Reduces both benzoquinones and naphthoquinones efficiently. Also exhibits azoreductase activity. Catalyzes the reductive cleavage of the azo bond in aromatic azo compounds to the corresponding amines. Preferred substrates are the large bis-azo dye Ponceau BS, amaranth and tropaeolin O. The protein is FMN-dependent NADH:quinone oxidoreductase 2 of Pseudomonas aeruginosa (strain ATCC 15692 / DSM 22644 / CIP 104116 / JCM 14847 / LMG 12228 / 1C / PRS 101 / PAO1).